Here is an 89-residue protein sequence, read N- to C-terminus: Large ribosomal subunit protein bL28 (89 aa).

The protein belongs to the bacterial ribosomal protein bL28 family.

The protein is Large ribosomal subunit protein bL28 of Chlamydia muridarum (strain MoPn / Nigg).